A 196-amino-acid polypeptide reads, in one-letter code: Ribosome maturation factor RimP (196 aa).

Positions 164-196 (LAPQKPNKPGPKKTGHEKKKPSNESAAGKPRAE) are disordered. Positions 173–182 (GPKKTGHEKK) are enriched in basic residues.

This sequence belongs to the RimP family.

It is found in the cytoplasm. Required for maturation of 30S ribosomal subunits. This Xanthomonas oryzae pv. oryzae (strain MAFF 311018) protein is Ribosome maturation factor RimP.